A 248-amino-acid chain; its full sequence is 23S rRNA (guanosine(2553)-2'-O)-methyltransferase RlmP (248 aa).

The S-adenosyl-L-methionine site is built by Arg123, Gly204, Val224, and Leu233.

It belongs to the class IV-like SAM-binding methyltransferase superfamily. RNA methyltransferase TrmH family. Homodimer.

The protein resides in the cytoplasm. The enzyme catalyses guanosine(2553) in 23S rRNA + S-adenosyl-L-methionine = 2'-O-methylguanosine(2553) in 23S rRNA + S-adenosyl-L-homocysteine + H(+). Specifically methylates the ribose of guanosine 2553 (G2553) in 23S rRNA. When the target G2553 is mutated, is able to methylate the ribose of adenosine, but it cannot methylate cytidine nor uridine. Modifies free 23S rRNA but not the fully assembled ribosome nor the 50S subunit, suggesting that the modification occurs early during ribosome biogenesis. In Bacillus subtilis (strain 168), this protein is 23S rRNA (guanosine(2553)-2'-O)-methyltransferase RlmP.